The sequence spans 173 residues: Protein sym1 (173 aa).

4 helical membrane-spanning segments follow: residues 12–32, 52–72, 129–149, and 151–171; these read QPIL…DVLA, MALY…GFLQ, ANLT…PLEY, and VLVV…INSG.

This sequence belongs to the peroxisomal membrane protein PXMP2/4 family.

The protein resides in the mitochondrion inner membrane. Its function is as follows. May be involved in cellular response to stress. Required to maintain mitochondrial DNA (mtDNA) integrity and stability. The protein is Protein sym1 (sym1) of Aspergillus oryzae (strain ATCC 42149 / RIB 40) (Yellow koji mold).